Reading from the N-terminus, the 369-residue chain is Cobalt-precorrin-5B C(1)-methyltransferase (369 aa).

The protein belongs to the CbiD family.

It carries out the reaction Co-precorrin-5B + S-adenosyl-L-methionine = Co-precorrin-6A + S-adenosyl-L-homocysteine. Its pathway is cofactor biosynthesis; adenosylcobalamin biosynthesis; cob(II)yrinate a,c-diamide from sirohydrochlorin (anaerobic route): step 6/10. Its function is as follows. Catalyzes the methylation of C-1 in cobalt-precorrin-5B to form cobalt-precorrin-6A. The protein is Cobalt-precorrin-5B C(1)-methyltransferase of Methanococcus vannielii (strain ATCC 35089 / DSM 1224 / JCM 13029 / OCM 148 / SB).